The primary structure comprises 1721 residues: Intersectin-1 (1721 aa).

One can recognise an EH 1 domain in the interval 21–109 (ERAKHDQQFH…PVMKQQPVAI (89 aa)). Residues 53-88 (LPQPVLAQIWALADMNNDGRMDQVEFSIAMKLIKLK) form the EF-hand 1 domain. Ca(2+)-binding residues include D66, N68, D70, R72, and E77. A Phosphoserine modification is found at S203. The EH 2 domain maps to 221–310 (SRLKYRQLFN…PEYIPPSFRR (90 aa)). The EF-hand 2 domain occupies 254–289 (LPQAQLASIWNLSDIDQDGKLTAEEFILAMHLIDVA). 5 residues coordinate Ca(2+): D267, D269, D271, K273, and E278. S318 is subject to Phosphoserine. 2 disordered regions span residues 322–348 (STSV…KLPV) and 650–701 (QRRA…KQEA). A KLERQ region spans residues 326 to 702 (DQRLPEEPVL…GEEKGKQEAQ (377 aa)). The stretch at 355–659 (RENFERGNLE…QRRAQERDKQ (305 aa)) forms a coiled coil. Position 687 is a phosphoserine (S687). An SH3 1 domain is found at 740–806 (VKVVYYRALY…PANYAEKIPE (67 aa)). A disordered region spans residues 836–868 (LAVTSSEPSTTPNNWADFSSTWPTSTNEKPETD). The span at 838-862 (VTSSEPSTTPNNWADFSSTWPTSTN) shows a compositional bias: polar residues. T897 is subject to Phosphothreonine. 3 positions are modified to phosphoserine: S901, S902, and S904. Positions 913–971 (VEGLQAQALYPWRAKKDNHLNFNKNDVITVLEQQDMWWFGEVQGQKGWFPKSYVKLISG) constitute an SH3 2 domain. A phosphoserine mark is found at S978, S986, and S995. 2 consecutive SH3 domains span residues 1002 to 1060 (VSGE…LKDS) and 1074 to 1138 (KKPE…LLSP). The segment at 1074–1138 (KKPEIAQVIA…PANYVKLLSP (65 aa)) is required for interaction with FCHSD2. The Bipartite nuclear localization signal; in isoform 2 motif lies at 1104–1127 (RKKNPGGWWEGELQARGKKRQIGW). S1137 is subject to Phosphoserine. The residue at position 1144 (T1144) is a Phosphothreonine. Residues 1155-1214 (AAVCQVIGMYDYTAQNDDELAFNKGQIINVLNKEDPDWWKGEVNGQVGLFPSNYVKLTTD) form the SH3 5 domain. In terms of domain architecture, DH spans 1237 to 1423 (KRQGYIHELI…EELCSQVNEG (187 aa)). The region spanning 1462-1571 (KFLHSGKLYK…WVQKIKAASE (110 aa)) is the PH domain. One can recognise a C2 domain in the interval 1579–1695 (KKREKAYLVR…KKDQGSKGPV (117 aa)). S1645 bears the Phosphoserine mark. 3 residues coordinate Ca(2+): D1667, S1670, and D1673.

Interacts (via DH domain) with CDC42. Interacts (via SH3 domain 1) with WASL. Interacts with dynamin, SNAP25 and SNAP23. Interacts with clathrin-associated proteins and other components of the endocytic machinery, such as SPIN90, EPS15, EPN1, EPN2, STON2, FCHO1, FCHO2 and DAB2. Interacts (via SH3 domains) with REPS1 and SGIP1. Interacts with ARHGAP31. Interacts with ADAM15. Interacts with PRRT2. Interacts (via SH3 domain 4) with FCHSD2 (via SH3 domain 2). Interacts (via SH3 domain 1) with DENND2B. Interacts (via SH3 domains) with CBL. Isoform 2: Interacts with CBL and DNM1. Isoform 2: Interacts with LMNA. Isoform 2: Interacts with importin subunit KPNA1; this is likely to mediate its import into the nucleus. Interacts with DNM2. In terms of assembly, (Microbial infection) Interacts with vaccinia virus protein A36. The cofactor is Ca(2+). As to expression, isoform 1 is expressed almost exclusively in the brain. Isoform 2 is detected in brain, spleen, lung, liver, heart, skeletal muscle and kidney. Isoform 5 is primarily expressed in brain, spleen, lung and kidney (at protein level). Isoform 1 and isoform 2 are detected in brain. Isoform 2 is ubiquitous in adult and fetal tissues with high expression in skeletal muscle, heart, spleen, ovary, testis and all fetal tissues tested and low expression in thymus, blood, lung, liver and pancreas. Isoform 1 is expressed almost exclusively in the brain, in all brain regions. Not expressed in the spinal cord.

It is found in the endomembrane system. It localises to the synapse. Its subcellular location is the synaptosome. The protein resides in the cell projection. The protein localises to the lamellipodium. It is found in the cell membrane. It localises to the membrane. Its subcellular location is the clathrin-coated pit. The protein resides in the recycling endosome. The protein localises to the endosome. It is found in the cytoplasmic vesicle. It localises to the cytoplasm. Its subcellular location is the nucleus envelope. Functionally, adapter protein that provides a link between the endocytic membrane traffic and the actin assembly machinery. Acts as a guanine nucleotide exchange factor (GEF) for CDC42, and thereby stimulates actin nucleation mediated by WASL and the ARP2/3 complex. Plays a role in the assembly and maturation of clathrin-coated vesicles. Recruits FCHSD2 to clathrin-coated pits. Involved in endocytosis of activated EGFR, and probably also other growth factor receptors. Involved in endocytosis of integrin beta-1 (ITGB1) and transferrin receptor (TFR); internalization of ITGB1 as DAB2-dependent cargo but not TFR may involve association with DAB2. Promotes ubiquitination and subsequent degradation of EGFR, and thereby contributes to the down-regulation of EGFR-dependent signaling pathways. In chromaffin cells, required for normal exocytosis of catecholamines. Required for rapid replenishment of release-ready synaptic vesicles at presynaptic active zones. Inhibits ARHGAP31 activity toward RAC1. Its function is as follows. Plays a role in synaptic vesicle endocytosis in brain neurons. The chain is Intersectin-1 from Homo sapiens (Human).